The chain runs to 462 residues: DIMBOA UDP-glucosyltransferase BX9 (462 aa).

Histidine 24 serves as the catalytic Proton acceptor. Histidine 24 is a binding site for an anthocyanidin. The Charge relay role is filled by aspartate 115. UDP-alpha-D-glucose-binding residues include threonine 137, alanine 336, glutamine 338, histidine 353, tryptophan 356, asparagine 357, serine 358, and glutamate 361. Glycine 376 serves as a coordination point for an anthocyanidin. Aspartate 377 and glutamine 378 together coordinate UDP-alpha-D-glucose.

The protein belongs to the UDP-glycosyltransferase family. Mg(2+) serves as cofactor. Ca(2+) is required as a cofactor. As to expression, expressed at the same levels in roots and shoots.

It catalyses the reaction DIMBOA + UDP-alpha-D-glucose = DIMBOA beta-D-glucoside + UDP + H(+). The enzyme catalyses DIBOA + UDP-alpha-D-glucose = DIBOA beta-D-glucoside + UDP + H(+). Glucosyltransferase involved in the last step of benzoxazinoid glucoside biosynthesis. Catalyzes the glucosylation of hydroxamic acids utilizing UDP-glucose as glucose doner, reducing the toxicity of these natural insecticides for storage. Can use DIMBOA and DIBOA as substrates, HMBOA (2-hydroxy-7-methoxy-2H-1,4-benzoxazin-3(4H)-one) and HBOA (2-hydroxy-2H-1,4-benzoxazin-3(4H)-one) with a lower efficiency, but not indole acetic acid or quercitin. The chain is DIMBOA UDP-glucosyltransferase BX9 (BX9) from Zea mays (Maize).